An 890-amino-acid chain; its full sequence is Phosphatidate phosphatase LPIN1 (890 aa).

An N-LIP region spans residues M1–I108. Phosphoserine occurs at positions 106 and 150. Disordered regions lie at residues V125–P183, S228–K300, K365–L392, and S421–D456. A compositionally biased stretch (basic residues) spans V152 to K161. The short motif at K153–R158 is the Nuclear localization signal element. Composition is skewed to basic and acidic residues over residues S162–N172 and S252–G265. 3 positions are modified to phosphoserine: S252, S254, and S260. T264 is modified (phosphothreonine). S294 is subject to Phosphoserine. Residue K425 is modified to N6-acetyllysine. Over residues G431–Q440 the composition is skewed to polar residues. S434, S438, and S449 each carry phosphoserine. Positions S441–D456 are enriched in low complexity. K565 is covalently cross-linked (Glycyl lysine isopeptide (Lys-Gly) (interchain with G-Cter in SUMO)). Residues E566–L616 are disordered. Over residues T581–L590 the composition is skewed to polar residues. The span at V594 to A607 shows a compositional bias: basic and acidic residues. K595 bears the N6-acetyllysine mark. A Glycyl lysine isopeptide (Lys-Gly) (interchain with G-Cter in SUMO) cross-link involves residue K595. Phosphoserine occurs at positions 600 and 601. The segment at Y624 to E830 is C-LIP. A DXDXT motif motif is present at residues D678–T682. Positions L689 to L693 match the LXXIL motif motif. A phosphoserine mark is found at S887 and S889.

The protein belongs to the lipin family. Interacts (via LXXIL motif) with PPARA. Interacts with PPARGC1A. Interaction with PPARA and PPARGC1A leads to the formation of a complex that modulates gene transcription. Interacts with MEF2C. Mg(2+) serves as cofactor. The cofactor is Mn(2+). In terms of processing, phosphorylated at multiple sites by mTOR in response to insulin, leading to its inactivation. Phosphorylation does not affect the catalytic activity but regulates the localization. Phosphorylation is decreased by epinephrine. Dephosphorylated by the CTDNEP1-CNEP1R1 complex. Dephosphorylation following mTOR inhibition promotes its activity. Post-translationally, acetylation at Lys-425 and Lys-595 by KAT5 in response to fatty acids promotes translocation to the endoplasmic reticulum and synthesis of diacylglycerol. Sumoylated. As to expression, specifically expressed in skeletal muscle. Also abundant in adipose tissue. Lower levels in some portions of the digestive tract.

The protein resides in the cytoplasm. It is found in the cytosol. The protein localises to the endoplasmic reticulum membrane. It localises to the nucleus membrane. It catalyses the reaction a 1,2-diacyl-sn-glycero-3-phosphate + H2O = a 1,2-diacyl-sn-glycerol + phosphate. The enzyme catalyses 1-octadecanoyl-2-(4Z,7Z,10Z,13Z,16Z,19Z-docosahexaenoyl)-sn-glycero-3-phosphate + H2O = 1-octadecanoyl-2-(4Z,7Z,10Z,13Z,16Z,19Z-docosahexaenoyl)-sn-glycerol + phosphate. It carries out the reaction 1-octadecanoyl-2-(5Z,8Z,11Z,14Z-eicosatetraenoyl)-sn-glycero-3-phosphate + H2O = 1-octadecanoyl-2-(5Z,8Z,11Z,14Z-eicosatetraenoyl)-sn-glycerol + phosphate. The catalysed reaction is 1-octadecanoyl-2-(9Z,12Z-octadecadienoyl)-sn-glycero-3-phosphate + H2O = 1-octadecanoyl-2-(9Z,12Z)-octadecadienoyl-sn-glycerol + phosphate. It catalyses the reaction 1-octadecanoyl-2-(9Z-octadecenoyl)-sn-glycero-3-phosphate + H2O = 1-octadecanoyl-2-(9Z-octadecenoyl)-sn-glycerol + phosphate. The enzyme catalyses 1-hexadecanoyl-2-(4Z,7Z,10Z,13Z,16Z,19Z-docosahexaenoyl)-sn-glycero-3-phosphate + H2O = 1-hexadecanoyl-2-(4Z,7Z,10Z,13Z,16Z,19Z-docosahexaenoyl)-sn-glycerol + phosphate. It carries out the reaction 1,2-dioctadecanoyl-sn-glycero-3-phosphate + H2O = 1,2-dioctadecanoyl-sn-glycerol + phosphate. The catalysed reaction is 1-hexadecanoyl-2-(5Z,8Z,11Z,14Z-eicosatetraenoyl)-sn-glycero-3-phosphate + H2O = 1-hexadecanoyl-2-(5Z,8Z,11Z,14Z-eicosatetraenoyl)-sn-glycerol + phosphate. It catalyses the reaction 1-hexadecanoyl-2-(9Z,12Z-octadecadienoyl)-sn-glycero-3-phosphate + H2O = 1-hexadecanoyl-2-(9Z,12Z-octadecadienoyl)-sn-glycerol + phosphate. The enzyme catalyses 1-hexadecanoyl-2-(9Z-octadecenoyl)-sn-glycero-3-phosphate + H2O = 1-hexadecanoyl-2-(9Z-octadecenoyl)-sn-glycerol + phosphate. It carries out the reaction 1,2-di-(4Z,7Z,10Z,13Z,16Z,19Z-docosahexaenoyl)-sn-glycero-3-phosphate + H2O = 1,2-di-(4Z,7Z,10Z,13Z,16Z,19Z-docosahexaenoyl)-sn-glycerol + phosphate. The catalysed reaction is 1,2-di-(5Z,8Z,11Z,14Z)-eicosatetraenoyl-sn-glycero-3-phosphate + H2O = 1,2-di-(5Z,8Z,11Z,14Z)-eicosatetraenoyl-sn-glycerol + phosphate. It catalyses the reaction 1,2-di-(9Z,12Z-octadecadienoyl)-sn-glycero-3-phosphate + H2O = 1,2-di-(9Z,12Z-octadecadienoyl)-sn-glycerol + phosphate. The enzyme catalyses 1,2-di-(9Z-octadecenoyl)-sn-glycero-3-phosphate + H2O = 1,2-di-(9Z-octadecenoyl)-sn-glycerol + phosphate. It carries out the reaction 1,2-dihexadecanoyl-sn-glycero-3-phosphate + H2O = 1,2-dihexadecanoyl-sn-glycerol + phosphate. Its activity is regulated as follows. Potently inhibited by sphingolipids, in particular, the sphingoid bases sphinganine and sphingosine and ceramide-1-phosphate. Inhibited by concentrations of Mg(2+) and Mn(2+) above their optimums and by Ca(2+), Zn(2+), N-ethylmaleimide and propranolol. With respect to regulation, sertraline and propanolol inhibit activity in dose-dependent manners with IC(50) values of 103 uM and 226 uM, respectively. Sertraline and propanolol inhibit activity in dose-dependent manners with IC(50) values of 108 uM and 271 uM, respectively. Its activity is regulated as follows. Sertraline and propanolol inhibit activity in dose-dependent manners with IC(50) values of 143 uM and 227 uM, respectively. Acts as a magnesium-dependent phosphatidate phosphatase enzyme which catalyzes the conversion of phosphatidic acid to diacylglycerol during triglyceride, phosphatidylcholine and phosphatidylethanolamine biosynthesis and therefore controls the metabolism of fatty acids at different levels. Is involved in adipocyte differentiation. Recruited at the mitochondrion outer membrane and is involved in mitochondrial fission by converting phosphatidic acid to diacylglycerol. Acts also as nuclear transcriptional coactivator for PPARGC1A/PPARA regulatory pathway to modulate lipid metabolism gene expression. The sequence is that of Phosphatidate phosphatase LPIN1 from Homo sapiens (Human).